The following is a 305-amino-acid chain: Dihydroorotate dehydrogenase B (NAD(+)), catalytic subunit (305 aa).

FMN contacts are provided by residues Ser-21 and 45 to 46; that span reads KA. Residues Lys-45 and 69–73 contribute to the substrate site; that span reads NAIGL. FMN is bound by residues Asn-99 and Asn-127. Asn-127 is a binding site for substrate. Cys-130 (nucleophile) is an active-site residue. FMN contacts are provided by Lys-165 and Ile-190. Substrate is bound at residue 191–192; that stretch reads NT. FMN is bound by residues Gly-216, 242–243, and 264–265; these read GG and GT.

Belongs to the dihydroorotate dehydrogenase family. Type 1 subfamily. As to quaternary structure, heterotetramer of 2 PyrK and 2 PyrD type B subunits. The cofactor is FMN.

Its subcellular location is the cytoplasm. The enzyme catalyses (S)-dihydroorotate + NAD(+) = orotate + NADH + H(+). The protein operates within pyrimidine metabolism; UMP biosynthesis via de novo pathway; orotate from (S)-dihydroorotate (NAD(+) route): step 1/1. Functionally, catalyzes the conversion of dihydroorotate to orotate with NAD(+) as electron acceptor. The sequence is that of Dihydroorotate dehydrogenase B (NAD(+)), catalytic subunit (pyrD) from Staphylococcus carnosus (strain TM300).